A 363-amino-acid polypeptide reads, in one-letter code: Protein-glutamate methylesterase/protein-glutamine glutaminase 1 (363 aa).

Residues 7–124 (KVLIVDDSAL…SRGMQEYARE (118 aa)) enclose the Response regulatory domain. At Asp58 the chain carries 4-aspartylphosphate. The CheB-type methylesterase domain maps to 164 to 356 (FSSTEKIIVI…RRLFGWLESQ (193 aa)). Active-site residues include Ser176, His202, and Asp298.

The protein belongs to the CheB family. Post-translationally, phosphorylated by CheA. Phosphorylation of the N-terminal regulatory domain activates the methylesterase activity.

The protein localises to the cytoplasm. It catalyses the reaction [protein]-L-glutamate 5-O-methyl ester + H2O = L-glutamyl-[protein] + methanol + H(+). The enzyme catalyses L-glutaminyl-[protein] + H2O = L-glutamyl-[protein] + NH4(+). Involved in chemotaxis. Part of a chemotaxis signal transduction system that modulates chemotaxis in response to various stimuli. Catalyzes the demethylation of specific methylglutamate residues introduced into the chemoreceptors (methyl-accepting chemotaxis proteins or MCP) by CheR. Also mediates the irreversible deamidation of specific glutamine residues to glutamic acid. The protein is Protein-glutamate methylesterase/protein-glutamine glutaminase 1 of Geobacter metallireducens (strain ATCC 53774 / DSM 7210 / GS-15).